We begin with the raw amino-acid sequence, 157 residues long: SsrA-binding protein (157 aa).

Belongs to the SmpB family.

It localises to the cytoplasm. Its function is as follows. Required for rescue of stalled ribosomes mediated by trans-translation. Binds to transfer-messenger RNA (tmRNA), required for stable association of tmRNA with ribosomes. tmRNA and SmpB together mimic tRNA shape, replacing the anticodon stem-loop with SmpB. tmRNA is encoded by the ssrA gene; the 2 termini fold to resemble tRNA(Ala) and it encodes a 'tag peptide', a short internal open reading frame. During trans-translation Ala-aminoacylated tmRNA acts like a tRNA, entering the A-site of stalled ribosomes, displacing the stalled mRNA. The ribosome then switches to translate the ORF on the tmRNA; the nascent peptide is terminated with the 'tag peptide' encoded by the tmRNA and targeted for degradation. The ribosome is freed to recommence translation, which seems to be the essential function of trans-translation. The polypeptide is SsrA-binding protein (Chlorobium luteolum (strain DSM 273 / BCRC 81028 / 2530) (Pelodictyon luteolum)).